Reading from the N-terminus, the 489-residue chain is Virion host shutoff protein (489 aa).

Disordered regions lie at residues 110-135 (EEASDVDASPPPSPITDSRPSSAFSN), 142-161 (SLASGTRGTAGSGAALPSAA), 285-319 (RSQTRRAIRREHTSSRSTETRPPLPPAAGGTETRV), and 332-364 (GYEDDEDLPLDPRDVTGGHPGPRSSSSEILTPP). The segment covering 124-134 (ITDSRPSSAFS) has biased composition (polar residues).

It belongs to the herpesviridae VHS protein family. As to quaternary structure, interacts with human EIF4H, EIF4A1 and EIF4A2; interaction with eIF4AI and EIF4A2 presumably allows Vhs protein to associate with the eIF4F cap-binding complex.

The protein resides in the virion. Minor structural protein that acts as an endoribonuclease during lytic infection. Degrades host mRNAs in the cytoplasm by cutting them at preferred sites, including some in regions of translation initiation. Together with inhibition of host splicing by ICP27, contributes to an overall decrease in host protein synthesis. Also, after the onset of viral transcription, accelerates the turnover of viral mRNA, thereby facilitating the sequential expression of different classes of viral genes. Binds translation initiation factors eIF4H, eIF4AI, and eIF4AII, thereby may interact directly with the translation initiation complex and thus digest specifically mRNAs. Also impedes antigen presentation by major histocompatibility complex class I and class II molecules, inhibits secretion of cytokines that would otherwise recruit lymphocytes and neutrophils cells to the site of infection and blocks the activation of dendritic cells. Plays a role in the inhibition of interferon-beta activation by the cGAS/STING pathway. Mechanistically, down-regulates the expression of host cGAS/MB21D1. Also decreases the accumulation of other interferon-induced mRNAs such as host IFIT3 or CH25H to subvert their antiviral activity. The chain is Virion host shutoff protein (UL41) from Human herpesvirus 1 (strain 17) (HHV-1).